Consider the following 404-residue polypeptide: Probable protein phosphatase 2C 30 (404 aa).

Over residues 42-52 the composition is skewed to basic and acidic residues; it reads AERGAEEETSG. Positions 42-72 are disordered; it reads AERGAEEETSGKRRRLDGGGGEASTDEEDRE. Residues 77–399 form the PPM-type phosphatase domain; that stretch reads RYGFTSVCGR…DNVSVVVVNL (323 aa). Asp-111, Gly-112, and Asp-298 together coordinate Mn(2+). A disordered region spans residues 321–369; sequence GRRERNRSSPTSNLSPRQSSSSGDEAPNDGAPSAAAGSESDEESAAEED. The segment covering 330–343 has biased composition (polar residues); that stretch reads PTSNLSPRQSSSSG. Residue Asp-390 participates in Mn(2+) binding.

The protein belongs to the PP2C family. Interacts with PYL5 and SAPK2. Binding to PYL5 is dependent on the presence of abscisic acid (ABA). Interacts with PYL3, PYL5 and PYL9. Binding to PYL5 and PYL9 is dependent on the presence of ABA. Mg(2+) serves as cofactor. Requires Mn(2+) as cofactor.

It localises to the nucleus. The enzyme catalyses O-phospho-L-seryl-[protein] + H2O = L-seryl-[protein] + phosphate. The catalysed reaction is O-phospho-L-threonyl-[protein] + H2O = L-threonyl-[protein] + phosphate. Functionally, together with ABI5, PYL5 and SAPK2, is part of an abscisic acid (ABA) signaling unit that modulates seed germination and early seedling growth. The chain is Probable protein phosphatase 2C 30 from Oryza sativa subsp. japonica (Rice).